The sequence spans 324 residues: Olfactory receptor 1L3 (324 aa).

The Extracellular portion of the chain corresponds to 1–25 (MGMSNLTRLSEFILLGLSSRSEDQR). N5 carries an N-linked (GlcNAc...) asparagine glycan. Residues 26-49 (PLFALFLIIYLVTLMGNLLIILAI) traverse the membrane as a helical segment. Over 50-57 (HSDPRLQN) the chain is Cytoplasmic. Residues 58-79 (PMYFFLSILSFADICYTTVIVP) form a helical membrane-spanning segment. The Extracellular segment spans residues 80 to 100 (KMLVNFLSEKKTISYAECLAQ). C97 and C189 form a disulfide bridge. A helical transmembrane segment spans residues 101–120 (MYFFLVFGNIDSYLLAAMAI). Topologically, residues 121–139 (NRCVAICNPFHYVTVMNRR) are cytoplasmic. Residues 140–158 (CCVLLLAFPITFSYFHSLL) traverse the membrane as a helical segment. Residues 159-196 (HVLLVNRLTFCTSNVIHHFFCDVNPVLKLSCSSTFVNE) are Extracellular-facing. Residues 197–219 (IVAMTEGLASVMAPFVCIIISYL) form a helical membrane-spanning segment. The Cytoplasmic portion of the chain corresponds to 220–236 (RILIAVLKIPSAAGKHK). The chain crosses the membrane as a helical span at residues 237-259 (AFSTCSSHLTVVILFYGSISYVY). At 260–271 (LQPLSSYTVKDR) the chain is on the extracellular side. Residues 272 to 291 (IATINYTVLTSVLNPFIYSL) form a helical membrane-spanning segment. The Cytoplasmic segment spans residues 292–324 (RNKDMKRGLQKLINKIKSQMSRFSTKTNKICGP).

This sequence belongs to the G-protein coupled receptor 1 family.

It is found in the cell membrane. Odorant receptor. The sequence is that of Olfactory receptor 1L3 (OR1L3) from Homo sapiens (Human).